A 569-amino-acid polypeptide reads, in one-letter code: Proline--tRNA ligase (569 aa).

This sequence belongs to the class-II aminoacyl-tRNA synthetase family. ProS type 1 subfamily. Homodimer.

Its subcellular location is the cytoplasm. It carries out the reaction tRNA(Pro) + L-proline + ATP = L-prolyl-tRNA(Pro) + AMP + diphosphate. Its function is as follows. Catalyzes the attachment of proline to tRNA(Pro) in a two-step reaction: proline is first activated by ATP to form Pro-AMP and then transferred to the acceptor end of tRNA(Pro). As ProRS can inadvertently accommodate and process non-cognate amino acids such as alanine and cysteine, to avoid such errors it has two additional distinct editing activities against alanine. One activity is designated as 'pretransfer' editing and involves the tRNA(Pro)-independent hydrolysis of activated Ala-AMP. The other activity is designated 'posttransfer' editing and involves deacylation of mischarged Ala-tRNA(Pro). The misacylated Cys-tRNA(Pro) is not edited by ProRS. This chain is Proline--tRNA ligase, found in Lactiplantibacillus plantarum (strain ATCC BAA-793 / NCIMB 8826 / WCFS1) (Lactobacillus plantarum).